Here is a 456-residue protein sequence, read N- to C-terminus: Gamma-glutamyl phosphate reductase (456 aa).

The residue at position 2 (Ser2) is an N-acetylserine.

This sequence belongs to the gamma-glutamyl phosphate reductase family.

The catalysed reaction is L-glutamate 5-semialdehyde + phosphate + NADP(+) = L-glutamyl 5-phosphate + NADPH + H(+). The protein operates within amino-acid biosynthesis; L-proline biosynthesis; L-glutamate 5-semialdehyde from L-glutamate: step 2/2. Its function is as follows. Catalyzes the NADPH dependent reduction of L-gamma-glutamyl 5-phosphate into L-glutamate 5-semialdehyde and phosphate. The product spontaneously undergoes cyclization to form 1-pyrroline-5-carboxylate. This Saccharomyces cerevisiae (strain ATCC 204508 / S288c) (Baker's yeast) protein is Gamma-glutamyl phosphate reductase (PRO2).